Here is a 608-residue protein sequence, read N- to C-terminus: uncharacterized protein (608 aa).

Residues 1-38 (MWLQQRLKVFPGLLSSSWARRVLAVSGFLVIIYWYIFS) form the signal peptide. Residues 39 to 563 (GSLFRSFWYA…EEHMAKQYRG (525 aa)) lie on the Extracellular side of the membrane. N-linked (GlcNAc...) asparagine glycosylation is present at asparagine 337. Residues 564-584 (LPFLFWFSVASLITLFHLFLF) form a helical membrane-spanning segment. The Cytoplasmic segment spans residues 585 to 608 (KLIYNEYCGPGAKPLFRSKEDTSV).

Its subcellular location is the membrane. This is an uncharacterized protein from Xenopus tropicalis (Western clawed frog).